We begin with the raw amino-acid sequence, 199 residues long: Phosphatidylethanolamine N-methyltransferase (199 aa).

Residues 1–12 (MTRLLGYVDPLD) are Lumenal-facing. Positions 13-33 (PSFVAAVITITFNPLYWNVVA) form an intramembrane region, helical. Over 34-45 (RWEHKTRKLSRA) the chain is Lumenal. Residues 46-66 (FGSPYLACYSLSVTILLLNFL) traverse the membrane as a helical segment. The Cytoplasmic portion of the chain corresponds to 67 to 93 (RSHCFTQAMLSQPRMESLDTPAAYSLG). A helical transmembrane segment spans residues 94-114 (LALLGLGVVLVLSSFFALGFA). 98–100 (GLG) contacts S-adenosyl-L-methionine. The Lumenal portion of the chain corresponds to 115–157 (GTFLGDYFGILKEARVTVFPFNILDNPMYWGSTANYLGWAIMH). Residues 158-178 (ASPTGLLLTVLVALTYIVALL) traverse the membrane as a helical segment. The Cytoplasmic portion of the chain corresponds to 179 to 199 (YEEPFTAEIYRQKASGSHKRS). 180–181 (EE) contacts S-adenosyl-L-methionine.

This sequence belongs to the class VI-like SAM-binding methyltransferase superfamily. PEMT/PEM2 methyltransferase family. Isoform 2 is N-glycosylated with high-mannose oligosaccharides. In terms of tissue distribution, primarily expressed in liver (at protein level).

Its subcellular location is the endoplasmic reticulum. It is found in the endoplasmic reticulum membrane. The protein resides in the mitochondrion membrane. It catalyses the reaction a 1,2-diacyl-sn-glycero-3-phospho-N-methylethanolamine + S-adenosyl-L-methionine = a 1,2-diacyl-sn-glycero-3-phospho-N,N-dimethylethanolamine + S-adenosyl-L-homocysteine + H(+). The catalysed reaction is a 1,2-diacyl-sn-glycero-3-phospho-N,N-dimethylethanolamine + S-adenosyl-L-methionine = a 1,2-diacyl-sn-glycero-3-phosphocholine + S-adenosyl-L-homocysteine + H(+). It carries out the reaction a 1,2-diacyl-sn-glycero-3-phosphoethanolamine + S-adenosyl-L-methionine = a 1,2-diacyl-sn-glycero-3-phospho-N-methylethanolamine + S-adenosyl-L-homocysteine + H(+). The enzyme catalyses 1,2-di-(9Z-octadecenoyl)-sn-glycero-3-phosphoethanolamine + S-adenosyl-L-methionine = 1,2-di-(9Z-octadecenoyl)-sn-glycero-3-phospho-N-methylethanolamine + S-adenosyl-L-homocysteine + H(+). It catalyses the reaction 1,2-di-(9Z-octadecenoyl)-sn-glycero-3-phospho-N-methylethanolamine + S-adenosyl-L-methionine = 1,2-di-(9Z-octadecenoyl)-sn-glycero-3-phospho-N,N-dimethylethanolamine + S-adenosyl-L-homocysteine + H(+). The catalysed reaction is 1,2-di-(9Z-octadecenoyl)-sn-glycero-3-phospho-N,N-dimethylethanolamine + S-adenosyl-L-methionine = 1,2-di-(9Z-octadecenoyl)-sn-glycero-3-phosphocholine + S-adenosyl-L-homocysteine + H(+). It carries out the reaction 1,2-di-(9Z,12Z-octadecadienoyl)-sn-glycero-3-phosphoethanolamine + S-adenosyl-L-methionine = 1,2-di-(9Z,12Z-octadecadienoyl)-sn-glycero-3-phospho-N-methylethanolamine + S-adenosyl-L-homocysteine + H(+). The enzyme catalyses 1,2-di-(9Z,12Z-octadecadienoyl)-sn-glycero-3-phospho-N-methylethanolamine + S-adenosyl-L-methionine = 1,2-di-(9Z,12Z-octadecadienoyl)-sn-glycero-3-phospho-N,N-dimethylethanolamine + S-adenosyl-L-homocysteine + H(+). It catalyses the reaction 1,2-di-(9Z,12Z-octadecadienoyl)-sn-glycero-3-phospho-N,N-dimethylethanolamine + S-adenosyl-L-methionine = 1,2-di-(9Z,12Z-octadecadienoyl)-sn-glycero-3-phosphocholine + S-adenosyl-L-homocysteine + H(+). The catalysed reaction is 1,2-di-(9Z,12Z,15Z-octadecatrienoyl)-sn-glycero-3-phosphoethanolamine + S-adenosyl-L-methionine = 1,2-di-(9Z,12Z,15Z-octadecatrienoyl)-sn-glycero-3-phospho-N-methylethanolamine + S-adenosyl-L-homocysteine + H(+). It carries out the reaction 1,2-di-(9Z,12Z,15Z-octadecatrienoyl)-sn-glycero-3-phospho-N-methylethanolamine + S-adenosyl-L-methionine = 1,2-di-(9Z,12Z,15Z-octadecatrienoyl)-sn-glycero-3-phospho-N,N-dimethylethanolamine + S-adenosyl-L-homocysteine + H(+). The enzyme catalyses 1,2-di-(9Z,12Z,15Z-octadecatrienoyl)-sn-glycero-3-phospho-N,N-dimethylethanolamine + S-adenosyl-L-methionine = 1,2-di-(9Z,12Z,15Z-octadecatrienoyl)-sn-glycero-3-phosphocholine + S-adenosyl-L-homocysteine + H(+). It catalyses the reaction 1-hexadecanoyl-2-(4Z,7Z,10Z,13Z,16Z,19Z-docosahexaenoyl)-sn-glycero-3-phosphoethanolamine + S-adenosyl-L-methionine = 1-hexadecanoyl-2-(4Z,7Z,10Z,13Z,16Z,19Z-docosahexaenoyl)-sn-glycero-3-phospho-N-methylethanolamine + S-adenosyl-L-homocysteine + H(+). The catalysed reaction is 1-hexadecanoyl-2-(4Z,7Z,10Z,13Z,16Z,19Z-docosahexaenoyl)-sn-glycero-3-phospho-N-methylethanolamine + S-adenosyl-L-methionine = 1-hexadecanoyl-2-(4Z,7Z,10Z,13Z,16Z,19Z-docosahexaenoyl)-sn-glycero-3-phospho-N,N-dimethylethanolamine + S-adenosyl-L-homocysteine + H(+). It carries out the reaction 1-hexadecanoyl-2-(4Z,7Z,10Z,13Z,16Z,19Z-docosahexaenoyl)-sn-glycero-3-phospho-N,N-dimethylethanolamine + S-adenosyl-L-methionine = 1-hexadecanoyl-2-(4Z,7Z,10Z,13Z,16Z,19Z-docosahexaenoyl)-sn-glycero-3-phosphocholine + S-adenosyl-L-homocysteine + H(+). It participates in phospholipid metabolism; phosphatidylcholine biosynthesis. Its activity is regulated as follows. The first methylation is rate-limiting. Functionally, catalyzes the three sequential steps of the methylation pathway for the biosynthesis of phosphatidylcholine, a critical and essential component for membrane structure. Uses S-adenosylmethionine (S-adenosyl-L-methionine, SAM or AdoMet) as the methyl group donor for the methylation of phosphatidylethanolamine (1,2-diacyl-sn-glycero-3-phosphoethanolamine, PE) to phosphatidylmonomethylethanolamine (1,2-diacyl-sn-glycero-3-phospho-N-methylethanolamine, PMME), PMME to phosphatidyldimethylethanolamine (1,2-diacyl-sn-glycero-3-phospho-N,N-dimethylethanolamine, PDME), and PDME to phosphatidylcholine (1,2-diacyl-sn-glycero-3-phosphocholine, PC), producing S-adenosyl-L-homocysteine in each step. Responsible for approximately 30% of hepatic PC with the CDP-choline pathway accounting for the other 70%. Catalyzes the three sequential steps of the methylation of 1,2-diacyl-sn-glycero-3-phospho-N-methylethanolamine (PMME) to 1,2-diacyl-sn-glycero-3-phospho-N,N-dimethylethanolamine (PDME) more efficiently than isoform 2. Induces increase in PC species with longer polyunsaturated chains than isoform 2. Its function is as follows. Produces a higher increase in the level of PC species containing long chains with three double bonds than isoform 1. This Homo sapiens (Human) protein is Phosphatidylethanolamine N-methyltransferase.